The primary structure comprises 548 residues: Sterol esterase TGL1 (548 aa).

Position 1 is an N-acetylmethionine; partial (Met-1). Residues 1–13 (MYFPFLGRLSITD) lie on the Lumenal side of the membrane. The chain crosses the membrane as a helical span at residues 14–34 (YIIVVLVYIESIISSVLKLIP). Residues 35–548 (QPMINLFEWL…TTALDALNKE (514 aa)) lie on the Cytoplasmic side of the membrane. An AB hydrolase-1 domain is found at 107-402 (VVYLHHGLLM…NYEHLDLIWG (296 aa)). The GXSXG motif lies at 199–203 (GFSQG). The active-site Nucleophile is Ser-201. Residue Lys-246 forms a Glycyl lysine isopeptide (Lys-Gly) (interchain with G-Cter in ubiquitin) linkage. Residues Asp-369 and His-396 each act as charge relay system in the active site. Disordered regions lie at residues 449–477 (TTHPTHGLSYRTHSADRSPLSVQADEADE) and 496–516 (IDEDNENEHQDDTEDQIHKEQ). 2 positions are modified to phosphoserine: Ser-462 and Ser-466. Residues 502–516 (NEHQDDTEDQIHKEQ) are compositionally biased toward basic and acidic residues. Phosphoserine occurs at positions 521 and 538. Positions 528–548 (KDLRQLDANSSTTALDALNKE) are disordered. Phosphothreonine is present on Thr-539.

It belongs to the AB hydrolase superfamily. Not N-glycosylated.

Its subcellular location is the lipid droplet. The protein localises to the membrane. It carries out the reaction a sterol ester + H2O = a sterol + a fatty acid + H(+). Functionally, mediates the hydrolysis of steryl esters (SE). Preferentially hydrolyzes ergosteryl and zymosteryl esters. Required for mobilization of SEs from lipid particles/droplets, thereby playing a central role in lipid metabolism and sterol homeostasis. Sterol intermediates stored in SE and set free by SE hydrolases are recycled to the sterol biosynthetic pathway and converted to the final product, ergosterol, in the endoplasmic reticulum. Also has weak lipase activity toward triglycerides at neutral pH, however, the physiological relevance of this activity is unclear. This Saccharomyces cerevisiae (strain ATCC 204508 / S288c) (Baker's yeast) protein is Sterol esterase TGL1 (TGL1).